A 33-amino-acid polypeptide reads, in one-letter code: Neutrophil defensin 1 (33 aa).

Intrachain disulfides connect cysteine 3–cysteine 31, cysteine 5–cysteine 20, and cysteine 10–cysteine 30.

It belongs to the alpha-defensin family.

It localises to the secreted. Its function is as follows. Anti-fungal and bactericidal activity, greater against Gram-positive bacteria. This is Neutrophil defensin 1 from Mesocricetus auratus (Golden hamster).